Reading from the N-terminus, the 217-residue chain is tRNA (guanine-N(7)-)-methyltransferase (217 aa).

4 residues coordinate S-adenosyl-L-methionine: Glu43, Asp68, Asn101, and Asn123. Lys127 contacts substrate. Residues 129–134 form an interaction with RNA region; the sequence is KHNKRR. Residues Asp159 and 196 to 199 contribute to the substrate site; that span reads TEYE.

This sequence belongs to the class I-like SAM-binding methyltransferase superfamily. TrmB family.

The catalysed reaction is guanosine(46) in tRNA + S-adenosyl-L-methionine = N(7)-methylguanosine(46) in tRNA + S-adenosyl-L-homocysteine. It participates in tRNA modification; N(7)-methylguanine-tRNA biosynthesis. Functionally, catalyzes the formation of N(7)-methylguanine at position 46 (m7G46) in tRNA. The sequence is that of tRNA (guanine-N(7)-)-methyltransferase from Clostridium botulinum (strain Okra / Type B1).